A 648-amino-acid polypeptide reads, in one-letter code: MSLKLPRNWDFNLKAEASKIARSRSVMTGEQMAAFHPPTTPNPLERPIKVGWLKKQRSIVKNWQQRYFVLRAQQLYYYKDEEDSKPQGCMYLPGSTVKEIATNPEEAGKFVFEVIPASSDQNRIGQDSYVLMASSQVEMEEWVKFLRRVAGTPSGAVFGQRLDETVAYEQKFGPHLVPILVEKCAEFILEHGVSEEGIFRLPGQDNLVKQLRDAFDAGERPSFDRDTDVHTVASLLKLYLRDLPEPVVPWSQYEGFLLCGQLMNADEAKAQQELVKQLSTLPRDNYNLLSYICRFLHEIQLNCAVNKMSVDNLATVIGVNLIRSKVEDPAVIMRGTPQIQRVMTMMIRDHEVLFPKSKDAPISPPAQKNDAKKAPVPRSSVGWDATEDPPLSRTDSFSNTASSPDATSPTGPLPSDQHQEDSGKAPRENPGDWKMQSRKRTQTLPNRKCFLTSAFQGTTSSKLEIFKNEFWSPSSEAKAGEGHRRTMSQDLRHLSNDQRTSTYDNVPTSPQSQGNPAGALSPPASDSKRDALVSTDSEMEAGSKNSGEDDLDSLQRTVQSLQKEIETQKQVYEEQIKNLEKENYDVWAKVVRLNEELERERKKFAALEISLRNVERSREDVEKRNRVLEEEVKEFVKSMEKPKTKTDP.

Positions 46–151 (RPIKVGWLKK…WVKFLRRVAG (106 aa)) constitute a PH domain. The Rho-GAP domain maps to 160-354 (QRLDETVAYE…MMIRDHEVLF (195 aa)). The segment at 356 to 559 (KSKDAPISPP…DLDSLQRTVQ (204 aa)) is disordered. Residues Ser-363, Ser-396, and Ser-403 each carry the phosphoserine modification. Over residues 393 to 410 (RTDSFSNTASSPDATSPT) the composition is skewed to polar residues. Residue Thr-407 is modified to Phosphothreonine. Residues 417 to 431 (QHQEDSGKAPRENPG) are compositionally biased toward basic and acidic residues. 2 stretches are compositionally biased toward polar residues: residues 453-462 (SAFQGTTSSK) and 497-515 (DQRT…SQGN). At Ser-537 the chain carries Phosphoserine. Positions 540 to 641 (EAGSKNSGED…VKEFVKSMEK (102 aa)) form a coiled coil.

Its function is as follows. GTPase activator for the Rho-type GTPases by converting them to an inactive GDP-bound state. This Mus musculus (Mouse) protein is Rho GTPase-activating protein 25 (Arhgap25).